Consider the following 1176-residue polypeptide: Pesticidal crystal protein Cry1Cb (1176 aa).

Belongs to the delta endotoxin family.

In terms of biological role, promotes colloidosmotic lysis by binding to the midgut epithelial cells of insects. Toxic to Spodoptera exigua and Trichoplusia ni. The polypeptide is Pesticidal crystal protein Cry1Cb (cry1Cb) (Bacillus thuringiensis subsp. galleriae).